We begin with the raw amino-acid sequence, 217 residues long: Probable GTP-binding protein EngB (217 aa).

In terms of domain architecture, EngB-type G spans 29–213 (GPLEVAFAGR…RQAIAETVGI (185 aa)). Residues 37-44 (GRSNVGKS), 64-68 (GRTQE), 91-94 (DMPG), 158-161 (TKTD), and 192-194 (TSS) contribute to the GTP site. Mg(2+)-binding residues include Ser44 and Thr66.

It belongs to the TRAFAC class TrmE-Era-EngA-EngB-Septin-like GTPase superfamily. EngB GTPase family. Requires Mg(2+) as cofactor.

Functionally, necessary for normal cell division and for the maintenance of normal septation. The protein is Probable GTP-binding protein EngB of Rhizobium johnstonii (strain DSM 114642 / LMG 32736 / 3841) (Rhizobium leguminosarum bv. viciae).